A 118-amino-acid polypeptide reads, in one-letter code: T cell receptor gamma variable 3 (118 aa).

Residues Met-1–Gln-17 form the signal peptide. The Ig-like domain maps to Lys-18–Arg-118. Cys-41 and Cys-113 are oxidised to a cystine. N-linked (GlcNAc...) asparagine glycosylation is present at Asn-106.

As to quaternary structure, gamma-delta TR is a heterodimer composed of a gamma and delta chain; disulfide-linked. The gamma-delta TR is associated with the transmembrane signaling CD3 coreceptor proteins following the stoichiometry: a single gamma-delta TR heterodimer associates with one CD3D-CD3E heterodimer, one CD3G-CD3E heterodimer and one CD247 homodimer forming a stable octameric structure. Upon activation, gamma-delta TR complex associates with FCER1G to initiate intracellular signaling.

The protein localises to the cell membrane. Functionally, v region of the variable domain of T cell receptor (TR) gamma chain that participates in the antigen recognition. Gamma-delta TRs recognize a variety of self and foreign non-peptide antigens frequently expressed at the epithelial boundaries between the host and external environment, including endogenous lipids presented by MH-like protein CD1D and phosphoantigens presented by butyrophilin-like molecule BTN3A1. Upon antigen recognition induces rapid, innate-like immune responses involved in pathogen clearance and tissue repair. Binding of gamma-delta TR complex to antigen triggers phosphorylation of immunoreceptor tyrosine-based activation motifs (ITAMs) in the CD3 chains by the LCK and FYN kinases, allowing the recruitment, phosphorylation, and activation of ZAP70 that facilitates phosphorylation of the scaffolding proteins LCP2 and LAT. This lead to the formation of a supramolecular signalosome that recruits the phospholipase PLCG1, resulting in calcium mobilization and ERK activation, ultimately leading to T cell expansion and differentiation into effector cells. Gamma-delta TRs are produced through somatic rearrangement of a limited repertoire of variable (V), diversity (D), and joining (J) genes. The potential diversity of gamma-delta TRs is conferred by the unique ability to rearrange (D) genes in tandem and to utilize all three reading frames. The combinatorial diversity is considerably increased by the sequence exonuclease trimming and random nucleotide (N) region additions which occur during the V-(D)-J rearrangements. The protein is T cell receptor gamma variable 3 of Homo sapiens (Human).